The sequence spans 320 residues: Olfactory receptor 51E2 (320 aa).

Residues methionine 1–phenylalanine 24 are Extracellular-facing. A glycan (N-linked (GlcNAc...) asparagine) is linked at asparagine 5. A helical transmembrane segment spans residues tryptophan 25–valine 45. Residues phenylalanine 46–serine 53 are Cytoplasmic-facing. The chain crosses the membrane as a helical span at residues leucine 54–threonine 74. Over serine 75 to alanine 98 the chain is Extracellular. Cysteines 96 and 178 form a disulfide. The helical transmembrane segment at glutamine 99 to phenylalanine 119 threads the bilayer. Residues aspartate 120–threonine 138 are Cytoplasmic-facing. Residues valine 139–proline 159 traverse the membrane as a helical segment. At leucine 160–valine 195 the chain is on the extracellular side. Residues valine 196–serine 216 traverse the membrane as a helical segment. The Cytoplasmic segment spans residues tyrosine 217–alanine 236. Residues phenylalanine 237–leucine 257 form a helical membrane-spanning segment. The Extracellular segment spans residues serine 258 to histidine 272. A helical transmembrane segment spans residues valine 273–alanine 293. The Cytoplasmic portion of the chain corresponds to lysine 294 to threonine 320.

The protein belongs to the G-protein coupled receptor 1 family. In terms of tissue distribution, expressed in brain and liver. Expressed only in some areas of the brain and in the olfactory epithelium.

It is found in the cell membrane. It localises to the early endosome membrane. Functionally, olfactory receptor. The activity of this receptor is probably mediated by G-proteins which induce elevation of intracellular Ca(2+), cAMP and activation of phosphorylation of the protein kinases PKA and MAPK3/MAPK1. Activation of OR51E2 may affect melanocyte proliferation, differentiation, and melanogenesis and may increase proliferation and migration of primary retinal pigment epithelial (RPE) cells. Activated by the short chain fatty acids (SCFA), acetate and propionate. In response to SCFA, may positively regulate renin secretion and increase blood pressure. May also be activated by steroid hormones and regulate cell proliferation. Activated by L-lactate in glomus cells. The protein is Olfactory receptor 51E2 (Or51e2) of Rattus norvegicus (Rat).